The primary structure comprises 189 residues: Nucleoside diphosphate kinase 6 (189 aa).

The ATP site is built by Lys-19, Phe-68, Arg-96, Thr-102, Arg-116, and Asn-126. His-129 (pros-phosphohistidine intermediate) is an active-site residue.

The protein belongs to the NDK family. Requires Mg(2+) as cofactor.

It catalyses the reaction a 2'-deoxyribonucleoside 5'-diphosphate + ATP = a 2'-deoxyribonucleoside 5'-triphosphate + ADP. The enzyme catalyses a ribonucleoside 5'-diphosphate + ATP = a ribonucleoside 5'-triphosphate + ADP. Functionally, major role in the synthesis of nucleoside triphosphates other than ATP. The ATP gamma phosphate is transferred to the NDP beta phosphate via a ping-pong mechanism, using a phosphorylated active-site intermediate. The chain is Nucleoside diphosphate kinase 6 (Nme6) from Mus musculus (Mouse).